Reading from the N-terminus, the 75-residue chain is UPF0352 protein VV1166 (75 aa).

The protein belongs to the UPF0352 family.

The protein is UPF0352 protein VV1166 of Vibrio vulnificus (strain YJ016).